The sequence spans 485 residues: Katanin p60 ATPase-containing subunit A1 (485 aa).

The interval His101–Glu173 is disordered. Over residues Asn141–Glu173 the composition is skewed to basic and acidic residues. Gly244–Thr251 contributes to the ATP binding site.

Belongs to the AAA ATPase family. Katanin p60 subunit A1 subfamily. Can homooligomerize into hexameric rings, which may be promoted by interaction with microtubules. Interacts with katnb1, which may serve as a targeting subunit.

Its subcellular location is the cytoplasm. The protein localises to the cytoskeleton. It is found in the microtubule organizing center. It localises to the centrosome. The protein resides in the spindle pole. Its subcellular location is the spindle. The enzyme catalyses n ATP + n H2O + a microtubule = n ADP + n phosphate + (n+1) alpha/beta tubulin heterodimers.. Its activity is regulated as follows. ATPase activity is stimulated by microtubules, which promote homooligomerization. ATP-dependent microtubule severing is stimulated by interaction with katnb1. In terms of biological role, catalytic subunit of a complex which severs microtubules in an ATP-dependent manner. Microtubule severing may promote rapid reorganization of cellular microtubule arrays and the release of microtubules from the centrosome following nucleation. The polypeptide is Katanin p60 ATPase-containing subunit A1 (katna1) (Danio rerio (Zebrafish)).